The following is a 75-amino-acid chain: uncharacterized protein (75 aa).

The next 2 helical transmembrane spans lie at 5–25 (VIIC…IFEI) and 42–62 (VAIF…GSVL).

It is found in the membrane. This is an uncharacterized protein from Saccharomyces cerevisiae (strain ATCC 204508 / S288c) (Baker's yeast).